The sequence spans 704 residues: Elongation factor G (704 aa).

One can recognise a tr-type G domain in the interval 8 to 291; the sequence is DKVRNIGIMA…AVVEYLASPV (284 aa). GTP is bound by residues 17–24, 90–94, and 144–147; these read AHIDAGKT, DTPGH, and NKMD.

The protein belongs to the TRAFAC class translation factor GTPase superfamily. Classic translation factor GTPase family. EF-G/EF-2 subfamily.

Its subcellular location is the cytoplasm. Catalyzes the GTP-dependent ribosomal translocation step during translation elongation. During this step, the ribosome changes from the pre-translocational (PRE) to the post-translocational (POST) state as the newly formed A-site-bound peptidyl-tRNA and P-site-bound deacylated tRNA move to the P and E sites, respectively. Catalyzes the coordinated movement of the two tRNA molecules, the mRNA and conformational changes in the ribosome. The chain is Elongation factor G from Chlorobium limicola (strain DSM 245 / NBRC 103803 / 6330).